We begin with the raw amino-acid sequence, 573 residues long: 2-succinyl-5-enolpyruvyl-6-hydroxy-3-cyclohexene-1-carboxylate synthase (573 aa).

It belongs to the TPP enzyme family. MenD subfamily. Homodimer. Mg(2+) is required as a cofactor. The cofactor is Mn(2+). It depends on thiamine diphosphate as a cofactor.

It catalyses the reaction isochorismate + 2-oxoglutarate + H(+) = 5-enolpyruvoyl-6-hydroxy-2-succinyl-cyclohex-3-ene-1-carboxylate + CO2. It participates in quinol/quinone metabolism; 1,4-dihydroxy-2-naphthoate biosynthesis; 1,4-dihydroxy-2-naphthoate from chorismate: step 2/7. The protein operates within quinol/quinone metabolism; menaquinone biosynthesis. Catalyzes the thiamine diphosphate-dependent decarboxylation of 2-oxoglutarate and the subsequent addition of the resulting succinic semialdehyde-thiamine pyrophosphate anion to isochorismate to yield 2-succinyl-5-enolpyruvyl-6-hydroxy-3-cyclohexene-1-carboxylate (SEPHCHC). In Shewanella sp. (strain W3-18-1), this protein is 2-succinyl-5-enolpyruvyl-6-hydroxy-3-cyclohexene-1-carboxylate synthase.